Consider the following 287-residue polypeptide: S-methyl-5'-thioadenosine phosphorylase (287 aa).

Residues Thr-13 and 55-56 (RH) each bind phosphate. Met-186 is a binding site for substrate. Thr-187 contacts phosphate. 210-212 (DYD) contacts substrate.

This sequence belongs to the PNP/MTAP phosphorylase family. MTAP subfamily. As to quaternary structure, homohexamer. Dimer of a homotrimer.

It catalyses the reaction S-methyl-5'-thioadenosine + phosphate = 5-(methylsulfanyl)-alpha-D-ribose 1-phosphate + adenine. Its pathway is amino-acid biosynthesis; L-methionine biosynthesis via salvage pathway; S-methyl-5-thio-alpha-D-ribose 1-phosphate from S-methyl-5'-thioadenosine (phosphorylase route): step 1/1. Functionally, catalyzes the reversible phosphorylation of S-methyl-5'-thioadenosine (MTA) to adenine and 5-methylthioribose-1-phosphate. Involved in the breakdown of MTA, a major by-product of polyamine biosynthesis. Responsible for the first step in the methionine salvage pathway after MTA has been generated from S-adenosylmethionine. Has broad substrate specificity with 6-aminopurine nucleosides as preferred substrates. This chain is S-methyl-5'-thioadenosine phosphorylase, found in Leptospira interrogans serogroup Icterohaemorrhagiae serovar Lai (strain 56601).